A 130-amino-acid chain; its full sequence is Small ribosomal subunit protein uS9 (130 aa).

It belongs to the universal ribosomal protein uS9 family.

The protein is Small ribosomal subunit protein uS9 of Shewanella pealeana (strain ATCC 700345 / ANG-SQ1).